The primary structure comprises 492 residues: Bifunctional protein GlmU (492 aa).

The interval 1–238 (MRDAAVVILA…AALVAGVNDR (238 aa)) is pyrophosphorylase. UDP-N-acetyl-alpha-D-glucosamine is bound by residues 9–12 (LAAG), Lys-23, Gln-80, and 85–86 (GT). Asp-111 provides a ligand contact to Mg(2+). Residues Gly-148, Glu-163, Asn-178, and Asn-236 each coordinate UDP-N-acetyl-alpha-D-glucosamine. Asn-236 is a binding site for Mg(2+). Residues 239 to 259 (VQLADLAAVLNRRIVEGHQRA) are linker. The N-acetyltransferase stretch occupies residues 260–492 (GVTIIDPAST…EDQGPEATGE (233 aa)). UDP-N-acetyl-alpha-D-glucosamine contacts are provided by Arg-341 and Lys-359. His-371 acts as the Proton acceptor in catalysis. Residues Tyr-374 and Asn-385 each coordinate UDP-N-acetyl-alpha-D-glucosamine. Acetyl-CoA-binding positions include Ala-388, 394–395 (NY), Ser-413, and Ala-431. A compositionally biased stretch (low complexity) spans 469-483 (EAAAAAGAGAGAAAE). Positions 469–492 (EAAAAAGAGAGAAAEDQGPEATGE) are disordered.

In the N-terminal section; belongs to the N-acetylglucosamine-1-phosphate uridyltransferase family. The protein in the C-terminal section; belongs to the transferase hexapeptide repeat family. In terms of assembly, homotrimer. Mg(2+) is required as a cofactor.

The protein localises to the cytoplasm. The catalysed reaction is alpha-D-glucosamine 1-phosphate + acetyl-CoA = N-acetyl-alpha-D-glucosamine 1-phosphate + CoA + H(+). The enzyme catalyses N-acetyl-alpha-D-glucosamine 1-phosphate + UTP + H(+) = UDP-N-acetyl-alpha-D-glucosamine + diphosphate. Its pathway is nucleotide-sugar biosynthesis; UDP-N-acetyl-alpha-D-glucosamine biosynthesis; N-acetyl-alpha-D-glucosamine 1-phosphate from alpha-D-glucosamine 6-phosphate (route II): step 2/2. It functions in the pathway nucleotide-sugar biosynthesis; UDP-N-acetyl-alpha-D-glucosamine biosynthesis; UDP-N-acetyl-alpha-D-glucosamine from N-acetyl-alpha-D-glucosamine 1-phosphate: step 1/1. It participates in bacterial outer membrane biogenesis; LPS lipid A biosynthesis. In terms of biological role, catalyzes the last two sequential reactions in the de novo biosynthetic pathway for UDP-N-acetylglucosamine (UDP-GlcNAc). The C-terminal domain catalyzes the transfer of acetyl group from acetyl coenzyme A to glucosamine-1-phosphate (GlcN-1-P) to produce N-acetylglucosamine-1-phosphate (GlcNAc-1-P), which is converted into UDP-GlcNAc by the transfer of uridine 5-monophosphate (from uridine 5-triphosphate), a reaction catalyzed by the N-terminal domain. The protein is Bifunctional protein GlmU of Mycolicibacterium vanbaalenii (strain DSM 7251 / JCM 13017 / BCRC 16820 / KCTC 9966 / NRRL B-24157 / PYR-1) (Mycobacterium vanbaalenii).